Reading from the N-terminus, the 341-residue chain is MSDRISIIGGGSWGTAIAYLLAINGKKVLMYVRDNNQKDSINKKRVNNKYFPDHQLPEGIEATTDIKEVVSFSNIVFLAVPTHATRAVMKKINHLLNEEQILVSTAKGIEEVNFLRNSQIIKEYCNNKIAVLSGPTHAEEVIDGLPTAVVVASRDKEVAESIQDIMMSSTFRVYTNPDVVGVEMGGAVKNIIAVAAGIADGLGYGDNTMAALITRGLHEMSRLGVHFGGKLLTFAGLAGMGDLVVTCTSNHSRNRRFGIKVGKGMNTEEALSSVNQVVEGVRTTRAVYDWYQGKKLNFELPITSQIYQVLFNDKNPLDAVNELMLRGPKHEIEEVVDDVNW.

NADPH is bound by residues S12, W13, R33, and K107. Sn-glycerol 3-phosphate is bound by residues K107, G134, and T136. Position 138 (A138) interacts with NADPH. Residues K189, D242, S252, R253, and N254 each coordinate sn-glycerol 3-phosphate. K189 serves as the catalytic Proton acceptor. An NADPH-binding site is contributed by R253. V277 and E279 together coordinate NADPH.

The protein belongs to the NAD-dependent glycerol-3-phosphate dehydrogenase family.

It localises to the cytoplasm. It carries out the reaction sn-glycerol 3-phosphate + NAD(+) = dihydroxyacetone phosphate + NADH + H(+). The catalysed reaction is sn-glycerol 3-phosphate + NADP(+) = dihydroxyacetone phosphate + NADPH + H(+). It participates in membrane lipid metabolism; glycerophospholipid metabolism. In terms of biological role, catalyzes the reduction of the glycolytic intermediate dihydroxyacetone phosphate (DHAP) to sn-glycerol 3-phosphate (G3P), the key precursor for phospholipid synthesis. This chain is Glycerol-3-phosphate dehydrogenase [NAD(P)+], found in Halothermothrix orenii (strain H 168 / OCM 544 / DSM 9562).